The chain runs to 515 residues: Bifunctional dihydrofolate reductase-thymidylate synthase (515 aa).

Residues 26 to 228 (AFSIVVAADQ…LSYEIMKYVP (203 aa)) enclose the DHFR domain. Val30 is a binding site for substrate. Residues Ala32, 38-44 (GIGDGET), 81-83 (RKT), and 101-104 (LSCR) contribute to the NADP(+) site. Ile154, Tyr160, and Thr178 together coordinate substrate. Residue 155–162 (GGARVYTE) participates in NADP(+) binding. The tract at residues 233–515 (ERQYLELIDR…YPPIKMEMAV (283 aa)) is thymidylate synthase. Arg253 is a dUMP binding site. The active site involves Cys395. Residues His396, 416–420 (QRCCD), Asn428, and 458–460 (HVY) contribute to the dUMP site.

This sequence in the N-terminal section; belongs to the dihydrofolate reductase family. In the C-terminal section; belongs to the thymidylate synthase family.

The catalysed reaction is (6S)-5,6,7,8-tetrahydrofolate + NADP(+) = 7,8-dihydrofolate + NADPH + H(+). It carries out the reaction dUMP + (6R)-5,10-methylene-5,6,7,8-tetrahydrofolate = 7,8-dihydrofolate + dTMP. Its pathway is cofactor biosynthesis; tetrahydrofolate biosynthesis; 5,6,7,8-tetrahydrofolate from 7,8-dihydrofolate: step 1/1. Its function is as follows. Bifunctional enzyme. Involved in de novo dTMP biosynthesis. Key enzyme in folate metabolism. Catalyzes an essential reaction for de novo glycine and purine synthesis, DNA precursor synthesis, and for the conversion of dUMP to dTMP. The polypeptide is Bifunctional dihydrofolate reductase-thymidylate synthase (Crithidia fasciculata).